The following is a 213-amino-acid chain: Protein Flattop (213 aa).

The segment at 127–213 is disordered; sequence VDQPAEQSKI…HNSRPASQEK (87 aa). Polar residues predominate over residues 151–213; it reads QHIQDQSRPA…HNSRPASQEK (63 aa).

The protein belongs to the Flattop family.

Its subcellular location is the cytoplasm. It localises to the cytoskeleton. The protein resides in the cilium basal body. The protein localises to the cell projection. It is found in the cilium. Its subcellular location is the apical cell membrane. It localises to the cilium axoneme. In terms of biological role, microtubule inner protein (MIP) part of the dynein-decorated doublet microtubules (DMTs) in cilia axoneme. Acts as a regulator of cilium basal body docking and positioning in mono- and multiciliated cells. Regulates basal body docking and cilia formation in multiciliated lung cells. Regulates kinocilium positioning and stereocilia bundle morphogenesis in the inner ear. This is Protein Flattop from Danio rerio (Zebrafish).